The primary structure comprises 429 residues: Na(+)/H(+) antiporter NhaA 1 (429 aa).

The next 12 membrane-spanning stretches (helical) occupy residues 32-52 (ISGG…NSPW), 73-93 (LSVQ…VAGL), 111-131 (VVPV…YSLL), 140-160 (GWAI…AVVG), 170-190 (FLLT…AVAY), 193-213 (ELSV…TLLV), 219-239 (AWWL…ASGV), 243-263 (VAGV…AGGP), 284-304 (VAVP…LGGL), 316-336 (VVVG…WLVA), 349-369 (WVDV…SLLI), and 383-403 (HVKV…TVVL).

The protein belongs to the NhaA Na(+)/H(+) (TC 2.A.33) antiporter family.

Its subcellular location is the cell membrane. The catalysed reaction is Na(+)(in) + 2 H(+)(out) = Na(+)(out) + 2 H(+)(in). In terms of biological role, na(+)/H(+) antiporter that extrudes sodium in exchange for external protons. In Frankia alni (strain DSM 45986 / CECT 9034 / ACN14a), this protein is Na(+)/H(+) antiporter NhaA 1.